Consider the following 570-residue polypeptide: Molecular chaperone MKKS (570 aa).

Glycine 192–serine 199 contributes to the ATP binding site. The segment at lysine 198–isoleucine 370 is substrate-binding apical domain.

Belongs to the TCP-1 chaperonin family. In terms of assembly, component of a complex composed at least of MKKS, BBS10, BBS12, TCP1, CCT2, CCT3, CCT4, CCT5 and CCT8. Interacts with STUB1. Interacts with BBS2 (via coiled coil domain). Interacts with CCDC28B. Interacts with BBS12. Interacts with SMARCC1, a component of the SWI/SNF complexes; the interaction takes place predominantly in the cytoplasm and may modulate SMARCC1 location. Interacts with DLEC1.

It localises to the cytoplasm. The protein localises to the cytoskeleton. It is found in the microtubule organizing center. Its subcellular location is the centrosome. The protein resides in the cytosol. It localises to the nucleus. In terms of biological role, probable molecular chaperone that assists the folding of proteins upon ATP hydrolysis. Plays a role in the assembly of BBSome, a complex involved in ciliogenesis regulating transports vesicles to the cilia. May play a role in protein processing in limb, cardiac and reproductive system development. May play a role in cytokinesis. This Pongo abelii (Sumatran orangutan) protein is Molecular chaperone MKKS (MKKS).